We begin with the raw amino-acid sequence, 261 residues long: Na(+)-translocating NADH-quinone reductase subunit C (261 aa).

A helical membrane pass occupies residues 11–31 (LLVALVVCLVSSVFVAGAAVA). Position 230 is an FMN phosphoryl threonine (Thr-230).

It belongs to the NqrC family. Composed of six subunits; NqrA, NqrB, NqrC, NqrD, NqrE and NqrF. The cofactor is FMN.

Its subcellular location is the cell inner membrane. The enzyme catalyses a ubiquinone + n Na(+)(in) + NADH + H(+) = a ubiquinol + n Na(+)(out) + NAD(+). In terms of biological role, NQR complex catalyzes the reduction of ubiquinone-1 to ubiquinol by two successive reactions, coupled with the transport of Na(+) ions from the cytoplasm to the periplasm. NqrA to NqrE are probably involved in the second step, the conversion of ubisemiquinone to ubiquinol. The polypeptide is Na(+)-translocating NADH-quinone reductase subunit C (Pseudomonas aeruginosa (strain ATCC 15692 / DSM 22644 / CIP 104116 / JCM 14847 / LMG 12228 / 1C / PRS 101 / PAO1)).